A 284-amino-acid chain; its full sequence is Tropomyosin (284 aa).

Positions 1–284 (MDAIKKKMQA…DMTFTELIGN (284 aa)) form a coiled coil.

The protein belongs to the tropomyosin family. Homodimer.

Functionally, tropomyosin, in association with the troponin complex, plays a central role in the calcium dependent regulation of muscle contraction. This Blattella germanica (German cockroach) protein is Tropomyosin.